We begin with the raw amino-acid sequence, 435 residues long: UDP-N-acetylmuramate--L-alanine ligase (435 aa).

An ATP-binding site is contributed by 108 to 114 (GSHGKTS).

The protein belongs to the MurCDEF family.

The protein localises to the cytoplasm. The catalysed reaction is UDP-N-acetyl-alpha-D-muramate + L-alanine + ATP = UDP-N-acetyl-alpha-D-muramoyl-L-alanine + ADP + phosphate + H(+). It participates in cell wall biogenesis; peptidoglycan biosynthesis. Its function is as follows. Cell wall formation. In Shouchella clausii (strain KSM-K16) (Alkalihalobacillus clausii), this protein is UDP-N-acetylmuramate--L-alanine ligase.